Consider the following 316-residue polypeptide: Protoheme IX farnesyltransferase (316 aa).

9 consecutive transmembrane segments (helical) span residues 32–52 (VMSLVVFTAFAGLVLAPGHIH), 53–73 (PVLGLIAILCIAVGAGASGAL), 93–113 (IPAGRIAPSEALAFGLVLSGF), 116–136 (VILGLAVNWLSAGILAFTIFF), 152–172 (NIVIGGAAGAFPPMIGWACVT), 180–200 (TVLFLIIFLWTPAHFWALALF), 221–241 (VTKHQIVAYAVLTAVCGILPS), 252–271 (LVAAALGAIFIYCSIAVWRM), and 289–309 (IFYLFAVFSALMIDRLASIFV).

Belongs to the UbiA prenyltransferase family. Protoheme IX farnesyltransferase subfamily.

The protein resides in the cell inner membrane. It carries out the reaction heme b + (2E,6E)-farnesyl diphosphate + H2O = Fe(II)-heme o + diphosphate. It functions in the pathway porphyrin-containing compound metabolism; heme O biosynthesis; heme O from protoheme: step 1/1. Its function is as follows. Converts heme B (protoheme IX) to heme O by substitution of the vinyl group on carbon 2 of heme B porphyrin ring with a hydroxyethyl farnesyl side group. The chain is Protoheme IX farnesyltransferase from Rhizobium leguminosarum bv. trifolii (strain WSM2304).